The chain runs to 148 residues: MF7 protein (148 aa).

This chain is MF7 protein, found in Myxoma virus (strain Lausanne) (MYXV).